Consider the following 1380-residue polypeptide: DNA-directed RNA polymerase subunit beta (1380 aa).

Belongs to the RNA polymerase beta chain family. As to quaternary structure, the RNAP catalytic core consists of 2 alpha, 1 beta, 1 beta' and 1 omega subunit. When a sigma factor is associated with the core the holoenzyme is formed, which can initiate transcription.

It catalyses the reaction RNA(n) + a ribonucleoside 5'-triphosphate = RNA(n+1) + diphosphate. In terms of biological role, DNA-dependent RNA polymerase catalyzes the transcription of DNA into RNA using the four ribonucleoside triphosphates as substrates. The chain is DNA-directed RNA polymerase subunit beta from Nitrobacter winogradskyi (strain ATCC 25391 / DSM 10237 / CIP 104748 / NCIMB 11846 / Nb-255).